The primary structure comprises 303 residues: Nodulation protein D (303 aa).

Positions 6–63 constitute an HTH lysR-type domain; sequence LDLNLLVALDALMTERKLTAAARSINLSQPAMSAAISRLRDYFRDDLFIMQRRELVPT. A DNA-binding region (H-T-H motif) is located at residues 23 to 42; the sequence is LTAAARSINLSQPAMSAAIS.

The protein belongs to the LysR transcriptional regulatory family.

Its function is as follows. NodD regulates the expression of the nodABCFE genes which encode other nodulation proteins. NodD is also a negative regulator of its own expression. Binds flavonoids as inducers. This is Nodulation protein D (nodD) from Rhizobium leguminosarum bv. viciae.